The chain runs to 185 residues: Sulfopyruvate decarboxylase subunit beta (185 aa).

This sequence belongs to the TPP enzyme family. In terms of assembly, heterododecamer composed of 6 subunits alpha and 6 subunits beta. Thiamine diphosphate serves as cofactor.

The catalysed reaction is 3-sulfopyruvate + H(+) = sulfoacetaldehyde + CO2. It participates in cofactor biosynthesis; coenzyme M biosynthesis; sulfoacetaldehyde from phosphoenolpyruvate and sulfite: step 4/4. Its function is as follows. Involved in the biosynthesis of the coenzyme M (2-mercaptoethanesulfonic acid). Catalyzes the decarboxylation of sulfopyruvate to sulfoacetaldehyde. The chain is Sulfopyruvate decarboxylase subunit beta from Methanothermobacter thermautotrophicus (strain ATCC 29096 / DSM 1053 / JCM 10044 / NBRC 100330 / Delta H) (Methanobacterium thermoautotrophicum).